A 356-amino-acid polypeptide reads, in one-letter code: Sorbitol dehydrogenase (356 aa).

Residue Cys-44 coordinates Zn(2+). Tyr-50 provides a ligand contact to substrate. Zn(2+) is bound by residues His-69 and Glu-70. Glu-155 lines the substrate pocket. NAD(+) is bound by residues Ile-183, Asp-203, and Arg-208. Phosphoserine is present on residues Ser-210 and Ser-224. Residues 272–274 (VGL) and 296–298 (VFR) each bind NAD(+). Substrate-binding residues include Arg-298 and Tyr-299.

This sequence belongs to the zinc-containing alcohol dehydrogenase family. Homotetramer. It depends on Zn(2+) as a cofactor. As to expression, expressed in lens.

It is found in the mitochondrion membrane. It localises to the cell projection. The protein localises to the cilium. Its subcellular location is the flagellum. It catalyses the reaction xylitol + NAD(+) = D-xylulose + NADH + H(+). The enzyme catalyses keto-D-fructose + NADH + H(+) = D-sorbitol + NAD(+). It carries out the reaction L-iditol + NAD(+) = keto-L-sorbose + NADH + H(+). Its activity is regulated as follows. Inhibited in vitro by metal chelators such as EDTA and 1,10-phenanthroline. Polyol dehydrogenase that catalyzes the reversible NAD(+)-dependent oxidation of various sugar alcohols. Is mostly active with xylitol, D-sorbitol (D-glucitol) and L-iditol as substrates, leading to the C2-oxidized products D-xylulose, D-fructose and L-sorbose, respectively. Is a key enzyme in the polyol pathway that interconverts glucose and fructose via sorbitol, which constitutes an important alternate route for glucose metabolism. May play a role in sperm motility by using sorbitol as an alternative energy source for sperm motility. Cannot use NADP(+) as the electron acceptor. Has no activity on ethanol, methanol, glycerol, galactitol and fructose 6-phosphate. In Bos taurus (Bovine), this protein is Sorbitol dehydrogenase (SORD).